The primary structure comprises 74 residues: ATP synthase subunit c (74 aa).

2 consecutive transmembrane segments (helical) span residues 8–28 (FIGTGLMAIGMYGAALGVSNI) and 52–72 (IGAGLAEAMGLFSFVIAMLLI).

Belongs to the ATPase C chain family. As to quaternary structure, F-type ATPases have 2 components, F(1) - the catalytic core - and F(0) - the membrane proton channel. F(1) has five subunits: alpha(3), beta(3), gamma(1), delta(1), epsilon(1). F(0) has three main subunits: a(1), b(2) and c(10-14). The alpha and beta chains form an alternating ring which encloses part of the gamma chain. F(1) is attached to F(0) by a central stalk formed by the gamma and epsilon chains, while a peripheral stalk is formed by the delta and b chains.

It is found in the cell inner membrane. In terms of biological role, f(1)F(0) ATP synthase produces ATP from ADP in the presence of a proton or sodium gradient. F-type ATPases consist of two structural domains, F(1) containing the extramembraneous catalytic core and F(0) containing the membrane proton channel, linked together by a central stalk and a peripheral stalk. During catalysis, ATP synthesis in the catalytic domain of F(1) is coupled via a rotary mechanism of the central stalk subunits to proton translocation. Its function is as follows. Key component of the F(0) channel; it plays a direct role in translocation across the membrane. A homomeric c-ring of between 10-14 subunits forms the central stalk rotor element with the F(1) delta and epsilon subunits. The chain is ATP synthase subunit c from Rickettsia conorii (strain ATCC VR-613 / Malish 7).